We begin with the raw amino-acid sequence, 607 residues long: ATP-dependent DNA helicase II subunit 1 (607 aa).

Residues 241–452 (MDLGNDVRIG…IETMQRILRG (212 aa)) enclose the Ku domain. Positions 570–604 (IKALKVSQLKDILRDRGLRVSGKKADLLDNLTNYV) constitute an SAP domain.

Belongs to the ku70 family. Heterodimer of pku70 and pku80.

It localises to the nucleus. The protein localises to the chromosome. The protein resides in the telomere. The enzyme catalyses ATP + H2O = ADP + phosphate + H(+). Its function is as follows. Single-stranded DNA-dependent ATP-dependent helicase. Involved in non-homologous end joining (NHEJ) DNA double strand break repair. DNA-binding is sequence-independent but has a high affinity to nicks in double-stranded DNA and to the ends of duplex DNA. Binds to naturally occurring chromosomal ends, and therefore provides chromosomal end protection. Required also for telomere recombination to repair telomeric ends in the absence of telomerase. ku70, of the ku70/ku80 heterodimer, binds to the stem loop of tlc1, the RNA component of telomerase. Required for mating-type switching. Involved in telomere maintenance. Interacts with telomeric repeats and subtelomeric sequences thereby controlling telomere length and protecting against subtelomeric rearrangement. Maintains telomeric chromatin, which is involved in silencing the expression of genes located at the telomere. The sequence is that of ATP-dependent DNA helicase II subunit 1 (pku70) from Schizosaccharomyces pombe (strain 972 / ATCC 24843) (Fission yeast).